The sequence spans 292 residues: Tetratricopeptide repeat protein 1 (292 aa).

Composition is skewed to basic and acidic residues over residues 1–12 (MEEKSEDCKVPE) and 47–64 (KAAE…ECFH). The segment at 1–125 (MEEKSEDCKV…SAKLKEEGNE (125 aa)) is disordered. Positions 88-98 (SSSELDEEYLI) are enriched in acidic residues. S90 carries the post-translational modification Phosphoserine. Over residues 99–125 (ELEKNMPEEEKQKRREESAKLKEEGNE) the composition is skewed to basic and acidic residues. TPR repeat units follow at residues 116 to 149 (SAKL…CPAC), 155 to 188 (SVLF…NPTY), and 189 to 222 (IRAI…DPSV).

In terms of assembly, interacts with the GAP domain of NF1. Interacts (via TPR repeats) with HSP90AA1 and HSPA8.

The chain is Tetratricopeptide repeat protein 1 (Ttc1) from Mus musculus (Mouse).